We begin with the raw amino-acid sequence, 106 residues long: uncharacterized protein (106 aa).

This sequence belongs to the HesB/IscA family.

This is an uncharacterized protein from Bradyrhizobium diazoefficiens (strain JCM 10833 / BCRC 13528 / IAM 13628 / NBRC 14792 / USDA 110).